The sequence spans 256 residues: Pimeloyl-[acyl-carrier protein] methyl ester esterase (256 aa).

The 228-residue stretch at 15–242 (HLVLLHGWGL…AAHAPFISHP (228 aa)) folds into the AB hydrolase-1 domain. Substrate-binding positions include W22, 82–83 (SL), and 143–147 (FLALQ). The active-site Nucleophile is S82. Catalysis depends on residues D207 and H235. Residue H235 participates in substrate binding.

Belongs to the AB hydrolase superfamily. Carboxylesterase BioH family. In terms of assembly, monomer.

It localises to the cytoplasm. It catalyses the reaction 6-carboxyhexanoyl-[ACP] methyl ester + H2O = 6-carboxyhexanoyl-[ACP] + methanol + H(+). The protein operates within cofactor biosynthesis; biotin biosynthesis. Functionally, the physiological role of BioH is to remove the methyl group introduced by BioC when the pimeloyl moiety is complete. It allows to synthesize pimeloyl-ACP via the fatty acid synthetic pathway through the hydrolysis of the ester bonds of pimeloyl-ACP esters. In Escherichia coli O17:K52:H18 (strain UMN026 / ExPEC), this protein is Pimeloyl-[acyl-carrier protein] methyl ester esterase.